Here is a 464-residue protein sequence, read N- to C-terminus: Asparagine--tRNA ligase (464 aa).

The protein belongs to the class-II aminoacyl-tRNA synthetase family. Homodimer.

It is found in the cytoplasm. The enzyme catalyses tRNA(Asn) + L-asparagine + ATP = L-asparaginyl-tRNA(Asn) + AMP + diphosphate + H(+). This Acetivibrio thermocellus (strain ATCC 27405 / DSM 1237 / JCM 9322 / NBRC 103400 / NCIMB 10682 / NRRL B-4536 / VPI 7372) (Clostridium thermocellum) protein is Asparagine--tRNA ligase.